Here is a 603-residue protein sequence, read N- to C-terminus: Sulfite reductase [NADPH] flavoprotein alpha-component (603 aa).

One can recognise a Flavodoxin-like domain in the interval isoleucine 64–valine 202. FMN-binding positions include serine 70 to alanine 75, serine 117 to glycine 120, and leucine 153 to alanine 162. Positions glutamate 236–proline 452 constitute an FAD-binding FR-type domain. FAD is bound by residues threonine 326, leucine 360, arginine 390–serine 393, threonine 408–glycine 410, tyrosine 414, and glycine 423–serine 426. NADP(+) contacts are provided by residues serine 523–arginine 524, lysine 529–glutamine 533, and aspartate 565. Residue tyrosine 603 coordinates FAD.

This sequence belongs to the NADPH-dependent sulphite reductase flavoprotein subunit CysJ family. It in the N-terminal section; belongs to the flavodoxin family. In the C-terminal section; belongs to the flavoprotein pyridine nucleotide cytochrome reductase family. As to quaternary structure, alpha(8)-beta(8). The alpha component is a flavoprotein, the beta component is a hemoprotein. FAD serves as cofactor. FMN is required as a cofactor.

The enzyme catalyses hydrogen sulfide + 3 NADP(+) + 3 H2O = sulfite + 3 NADPH + 4 H(+). It participates in sulfur metabolism; hydrogen sulfide biosynthesis; hydrogen sulfide from sulfite (NADPH route): step 1/1. In terms of biological role, component of the sulfite reductase complex that catalyzes the 6-electron reduction of sulfite to sulfide. This is one of several activities required for the biosynthesis of L-cysteine from sulfate. The flavoprotein component catalyzes the electron flow from NADPH -&gt; FAD -&gt; FMN to the hemoprotein component. The protein is Sulfite reductase [NADPH] flavoprotein alpha-component of Sodalis glossinidius (strain morsitans).